Consider the following 253-residue polypeptide: Ubiquinone biosynthesis O-methyltransferase (253 aa).

Positions 47, 78, 99, and 141 each coordinate S-adenosyl-L-methionine.

Belongs to the methyltransferase superfamily. UbiG/COQ3 family.

The catalysed reaction is a 3-demethylubiquinol + S-adenosyl-L-methionine = a ubiquinol + S-adenosyl-L-homocysteine + H(+). The enzyme catalyses a 3-(all-trans-polyprenyl)benzene-1,2-diol + S-adenosyl-L-methionine = a 2-methoxy-6-(all-trans-polyprenyl)phenol + S-adenosyl-L-homocysteine + H(+). The protein operates within cofactor biosynthesis; ubiquinone biosynthesis. In terms of biological role, O-methyltransferase that catalyzes the 2 O-methylation steps in the ubiquinone biosynthetic pathway. The protein is Ubiquinone biosynthesis O-methyltransferase of Rhodopseudomonas palustris (strain BisB5).